A 495-amino-acid chain; its full sequence is Putative aldehyde dehydrogenase AldA (495 aa).

Position 212–218 (212–218 (GKGSESG)) interacts with NAD(+). Catalysis depends on residues Glu-256 and Cys-290.

The protein belongs to the aldehyde dehydrogenase family.

The catalysed reaction is an aldehyde + NAD(+) + H2O = a carboxylate + NADH + 2 H(+). The sequence is that of Putative aldehyde dehydrogenase AldA (aldA) from Staphylococcus aureus (strain bovine RF122 / ET3-1).